Here is a 552-residue protein sequence, read N- to C-terminus: MMDSDDDMLDAHDMDSVDYDFDSGGTDDDNDIDETDYVFGEADTDDAAIIAYHRSQINYVVLKEEDIRRHQKDDVGRVSVVLSITDVQASLLLLHYHWSVSKVNDEWFADEDRVRRTVGILEGPAPDGREFTCGICFESYPLEETISVSCGHPFCATCWTGYISTSINDGPGCLMLKCPYPCCPAAIGRDMIDNLCSKEDKERYYRYFLRSYVEVNREMKCCPAPGCEHAISFAAGTESNYDVSCLCSHSFCWNCSEEAHRPVDCDTVGKWILKNSTESENMNWILANSKPCPKCKRPIEKNHGCMHMTCTPPCKFEFCWLCLNAWTEHGESSGGYYACNRYEAAKKQGLYDEAERRREMAKNSLEKYTHYYKRWASNQVSRQKAMGDLQKMQSEKLRKLSDIQCTSESQLKFIAEAWLQIIECRRVLKWTYAYGYYVPDDHTKKQFFEYLQGEAESGLERLHECIENDIEVFEFGEGPSEEFNHFRTKLTDLTSITKTFFQNLVKALENGLADVDSHAASSKPANCKPSSNTKDGGKGKKEALTMAGSAET.

The tract at residues 129-343 is TRIAD supradomain; the sequence is REFTCGICFE…GGYYACNRYE (215 aa). Residues Cys-133, Cys-136, Cys-150, His-152, Cys-155, Cys-158, Cys-178, Cys-183, Cys-222, Cys-227, Cys-245, Cys-247, Cys-252, Cys-255, His-260, Cys-265, Cys-292, and Cys-295 each coordinate Zn(2+). Residues 133–183 form an RING-type 1 zinc finger; that stretch reads CGICFESYPLEETISVSCGHPFCATCWTGYISTSINDGPGCLMLKCPYPCC. The IBR-type zinc finger occupies 202–265; it reads ERYYRYFLRS…SEEAHRPVDC (64 aa). The segment at 292-322 adopts an RING-type 2; atypical zinc-finger fold; that stretch reads CPKCKRPIEKNHGCMHMTCTPPCKFEFCWLC. The active site involves Cys-305. Positions 310, 314, 319, 322, 329, and 339 each coordinate Zn(2+). The segment at 518–552 is disordered; the sequence is HAASSKPANCKPSSNTKDGGKGKKEALTMAGSAET. Positions 519 to 534 are enriched in polar residues; sequence AASSKPANCKPSSNTK.

This sequence belongs to the RBR family. Ariadne subfamily. The cofactor is Zn(2+).

The catalysed reaction is [E2 ubiquitin-conjugating enzyme]-S-ubiquitinyl-L-cysteine + [acceptor protein]-L-lysine = [E2 ubiquitin-conjugating enzyme]-L-cysteine + [acceptor protein]-N(6)-ubiquitinyl-L-lysine.. Its pathway is protein modification; protein ubiquitination. Functionally, might act as an E3 ubiquitin-protein ligase, or as part of E3 complex, which accepts ubiquitin from specific E2 ubiquitin-conjugating enzymes and then transfers it to substrates. This chain is Putative E3 ubiquitin-protein ligase ARI6 (ARI6), found in Arabidopsis thaliana (Mouse-ear cress).